The primary structure comprises 320 residues: Glucokinase (320 aa).

Residue G12–T17 coordinates ATP.

The protein belongs to the bacterial glucokinase family.

The protein localises to the cytoplasm. It carries out the reaction D-glucose + ATP = D-glucose 6-phosphate + ADP + H(+). The sequence is that of Glucokinase from Nitrobacter hamburgensis (strain DSM 10229 / NCIMB 13809 / X14).